A 311-amino-acid chain; its full sequence is Pyrimidine-specific ribonucleoside hydrolase RihA (311 aa).

Residue His-240 is part of the active site.

The protein belongs to the IUNH family. RihA subfamily.

Hydrolyzes cytidine or uridine to ribose and cytosine or uracil, respectively. The chain is Pyrimidine-specific ribonucleoside hydrolase RihA from Klebsiella pneumoniae subsp. pneumoniae (strain ATCC 700721 / MGH 78578).